Here is a 135-residue protein sequence, read N- to C-terminus: UPF0102 protein Aave_0630 (135 aa).

Positions M1–R21 are disordered.

Belongs to the UPF0102 family.

The polypeptide is UPF0102 protein Aave_0630 (Paracidovorax citrulli (strain AAC00-1) (Acidovorax citrulli)).